The following is a 384-amino-acid chain: MSRLQFQLQATDGAARRGQLSFPCGTVQTPAFMPVGTYGAVKAVLPGQLCDLGAEIILGNTFHLFLRPGLEVIADHGGLHGFMRWNGPILTDSGGFQVFSLAHRRKISEQGVTFAAPTDGAQVFLGPEESMKIQKVLNSDVVMIFDECTPYPATEDVARDSMELSLRWAQRSRDAHDALDNDAALFGIIQGGVHPDLRGRSLDGLQAIGFDGYAIGGLAVGESESERNVILEYLHPRLPVDRPRYLMGVGRPEDLVESVARGVDMFDCVMPTRHARNGQYFTGFGTVKIRNACYARDVDPIEPGCGCPACVGGYTRAYLRHLDRCNEMLASMLGSLHNLWYYETLMANMRAAITAGTFFTFRHSFYLARGLDPPPLPEVASCAG.

Asp-92 acts as the Proton acceptor in catalysis. Substrate-binding positions include 92-96 (DSGGF), Asp-146, Gln-190, and Gly-217. Residues 248-254 (GVGRPED) form an RNA binding region. Asp-267 acts as the Nucleophile in catalysis. The interval 272–276 (TRHAR) is RNA binding; important for wobble base 34 recognition. Residues Cys-305, Cys-307, Cys-310, and His-337 each contribute to the Zn(2+) site.

Belongs to the queuine tRNA-ribosyltransferase family. Homodimer. Within each dimer, one monomer is responsible for RNA recognition and catalysis, while the other monomer binds to the replacement base PreQ1. Zn(2+) serves as cofactor.

The catalysed reaction is 7-aminomethyl-7-carbaguanine + guanosine(34) in tRNA = 7-aminomethyl-7-carbaguanosine(34) in tRNA + guanine. It participates in tRNA modification; tRNA-queuosine biosynthesis. Its function is as follows. Catalyzes the base-exchange of a guanine (G) residue with the queuine precursor 7-aminomethyl-7-deazaguanine (PreQ1) at position 34 (anticodon wobble position) in tRNAs with GU(N) anticodons (tRNA-Asp, -Asn, -His and -Tyr). Catalysis occurs through a double-displacement mechanism. The nucleophile active site attacks the C1' of nucleotide 34 to detach the guanine base from the RNA, forming a covalent enzyme-RNA intermediate. The proton acceptor active site deprotonates the incoming PreQ1, allowing a nucleophilic attack on the C1' of the ribose to form the product. After dissociation, two additional enzymatic reactions on the tRNA convert PreQ1 to queuine (Q), resulting in the hypermodified nucleoside queuosine (7-(((4,5-cis-dihydroxy-2-cyclopenten-1-yl)amino)methyl)-7-deazaguanosine). The polypeptide is Queuine tRNA-ribosyltransferase (Xylella fastidiosa (strain M12)).